The following is a 1342-amino-acid chain: Restriction of telomere capping protein 1 (1342 aa).

Residues 1 to 39 (MSLSPHVENASIPKGSTPIPKNRNVSSIGKGEFLGSSSS) are disordered. WD repeat units lie at residues 207–248 (NKFS…SIDN), 256–296 (EHTR…SKSS), 305–342 (TASDSIRDVKWMPGYNFASKNDQGSSTYGNLKSGYKFA), 367–406 (AHTGPGLCLNWHPNQEYIATGGRDGKCCLWFVGDNANAAE), 439–486 (NTGY…IPKH), and 489–527 (LSETPSLGLVWWDENLIFNIDKGTRINGWDINKEPTVLE). 5 disordered regions span residues 559–593 (PELQPTSSTTCKKHPGTIKNPKNGNPENQGIIGGI), 600–619 (TGLTSFTPERPPTLKAGPTF), 630–651 (ASSFNSSSASLTSLTPQTENRE), 736–766 (KNATETHGDNTTTTNNNDDGDDDDDDDDDDD), and 788–831 (LMNE…DRSR). Positions 630 to 644 (ASSFNSSSASLTSLT) are enriched in low complexity. Residues 753-766 (DDGDDDDDDDDDDD) show a composition bias toward acidic residues. Positions 815–824 (SSISSISASR) are enriched in low complexity. Residues 844-884 (KIQTLVDLISIATHNASVYLSIDDLTNFKIWILIRDSLLWD) form a WD 7 repeat. Disordered regions lie at residues 942–962 (AFRANSDEPSDAEKKPVSKLK) and 1014–1043 (DEHEHQEEEQPHDSPTKSAQFHASPIAKSI). 2 stretches are compositionally biased toward basic and acidic residues: residues 952 to 962 (DAEKKPVSKLK) and 1016 to 1028 (HEHQEEEQPHDSP). Ser-1037, Ser-1081, Ser-1088, Ser-1090, Ser-1124, and Ser-1134 each carry phosphoserine. WD repeat units lie at residues 1130–1170 (SRPD…KQLY) and 1217–1256 (LFGIAADVLKYCPFEDIMGSEGDQSSIRLFCERCGELITN). The RING-type; degenerate zinc-finger motif lies at 1294–1336 (CVLCERPLKKLTMVILPCGHEGHFQCIQEWFLDENEQECPGGC).

Belongs to the WD repeat RTC1 family.

The protein resides in the vacuole. Functionally, may be involved in a process influencing telomere capping. The sequence is that of Restriction of telomere capping protein 1 (RTC1) from Saccharomyces cerevisiae (strain Lalvin EC1118 / Prise de mousse) (Baker's yeast).